The chain runs to 551 residues: Terpene synthase 10 (551 aa).

Positions 303, 307, and 455 each coordinate Mg(2+). The DDXXD motif signature appears at 303–307 (DDIYD).

Belongs to the terpene synthase family. Mg(2+) serves as cofactor.

In terms of biological role, catalyzes the cyclization of farnesyl diphosphate to sesquiterpene olefins. This is Terpene synthase 10 (TPS10) from Ricinus communis (Castor bean).